The sequence spans 485 residues: Phenylalanine--tRNA ligase alpha subunit, cytoplasmic (485 aa).

L-phenylalanine-binding positions include Thr-318, Gln-360–Glu-362, and Tyr-400. Glu-402 contributes to the Mg(2+) binding site. Residue Phe-426 coordinates L-phenylalanine.

The protein belongs to the class-II aminoacyl-tRNA synthetase family. Phe-tRNA synthetase alpha subunit type 2 subfamily. In terms of assembly, tetramer of two alpha and two beta subunits. Requires Mg(2+) as cofactor.

It localises to the cytoplasm. The protein resides in the cytosol. It catalyses the reaction tRNA(Phe) + L-phenylalanine + ATP = L-phenylalanyl-tRNA(Phe) + AMP + diphosphate + H(+). This is Phenylalanine--tRNA ligase alpha subunit, cytoplasmic from Arabidopsis thaliana (Mouse-ear cress).